Consider the following 1205-residue polypeptide: Plasma membrane calcium-transporting ATPase 1 (1205 aa).

Residues 2–104 (GDMANNSVAY…KTFLQLVWEA (103 aa)) are Cytoplasmic-facing. Residues 94-111 (PKTFLQLVWEALQDVTLI) are calmodulin-binding subdomain A. A helical transmembrane segment spans residues 105–125 (LQDVTLIILEIAAVVSLGLSF). The Extracellular segment spans residues 126–153 (YQPPGGNEALCGSVNVGEEEEESEAGWI). Residues 154 to 174 (EGAAILLSVVCVVLVTAFNDW) traverse the membrane as a helical segment. Topologically, residues 175–351 (SKEKQFRGLQ…KEKSVLQGKL (177 aa)) are cytoplasmic. The segment at 296-343 (EEEKEKEKKDKKTKAQDGAAMEMQPLKSEDGVDGDEKDKKRSNLPKKE) is disordered. 2 stretches are compositionally biased toward basic and acidic residues: residues 300 to 310 (EKEKKDKKTKA) and 322 to 343 (KSED…PKKE). A helical transmembrane segment spans residues 352–371 (TKLAVQIGKAGLLMSAITVI). Over 372-403 (ILVLYFVIDTSWVQKRPWLAECTPIYIQYFVK) the chain is Extracellular. Residues 404-424 (FFIIGVTVLVVAVPEGLPLAV) form a helical membrane-spanning segment. The Cytoplasmic portion of the chain corresponds to 425–840 (TISLAYSVKK…RNVYDSISKF (416 aa)). D460 acts as the 4-aspartylphosphate intermediate in catalysis. Mg(2+) contacts are provided by D460, T462, and D782. A helical membrane pass occupies residues 841–861 (LQFQLTVNVVAVIVAFTGACI). At 862–868 (TQDSPLK) the chain is on the extracellular side. A helical transmembrane segment spans residues 869-889 (AVQMLWVNLIMDTLASLALAT). Residues 890–912 (EPPTEALLLRKPYGRNKPLISRT) are Cytoplasmic-facing. Residues 913–933 (MMKNILGHAFYQLVVVFTLLF) form a helical membrane-spanning segment. At 934–956 (AGEKIFDIDSGRNAPLHAPPSEH) the chain is on the extracellular side. The helical transmembrane segment at 957-976 (YTIVFNTFVMMQLFNEINAR) threads the bilayer. At 977 to 990 (KIHGERNVFEGIFN) the chain is on the cytoplasmic side. A helical transmembrane segment spans residues 991-1012 (NAIFCTIVLGTFVVQIIIVQFG). Residues 1013–1024 (GKPFSCSKLSIE) are Extracellular-facing. The chain crosses the membrane as a helical span at residues 1025 to 1045 (QWLWSVFLGMGTLLWGQLIST). The Cytoplasmic segment spans residues 1046 to 1205 (IPTSRLKFLK…SPLHSLETSL (160 aa)). A Phosphothreonine; by PKC modification is found at T1101. Positions 1145–1205 (PLIDDTDAED…SPLHSLETSL (61 aa)) are disordered. Positions 1183–1205 (TDMNKSATSSSPGSPLHSLETSL) are enriched in polar residues.

This sequence belongs to the cation transport ATPase (P-type) (TC 3.A.3) family. Type IIB subfamily.

It is found in the cell membrane. The catalysed reaction is Ca(2+)(in) + ATP + H2O = Ca(2+)(out) + ADP + phosphate + H(+). Catalyzes the hydrolysis of ATP coupled with the transport of calcium from the cytoplasm to the extracellular space thereby maintaining intracellular calcium homeostasis. The polypeptide is Plasma membrane calcium-transporting ATPase 1 (Gallus gallus (Chicken)).